A 110-amino-acid chain; its full sequence is U1-lycotoxin-Ls1bb (110 aa).

The N-terminal stretch at 1–20 (MKFVLLFGVLLVTLFSYSSA) is a signal peptide. The propeptide occupies 21–44 (EMLDDFDQADEDELLSLIEKEEAR). 4 disulfide bridges follow: C47/C62, C54/C71, C61/C89, and C73/C87.

The protein belongs to the neurotoxin 19 (CSTX) family. 03 subfamily. As to expression, expressed by the venom gland.

It localises to the secreted. The chain is U1-lycotoxin-Ls1bb from Lycosa singoriensis (Wolf spider).